Reading from the N-terminus, the 61-residue chain is Probable tautomerase BH3814 (61 aa).

Residue P2 is the Proton acceptor; via imino nitrogen of the active site.

Belongs to the 4-oxalocrotonate tautomerase family.

The protein is Probable tautomerase BH3814 of Halalkalibacterium halodurans (strain ATCC BAA-125 / DSM 18197 / FERM 7344 / JCM 9153 / C-125) (Bacillus halodurans).